The sequence spans 624 residues: Probable potassium transport system protein Kup 1 (624 aa).

12 consecutive transmembrane segments (helical) span residues 10-30, 48-68, 94-114, 133-153, 159-179, 210-230, 242-262, 270-290, 331-351, 363-383, 388-408, and 413-433; these read LALGALGVVFGDIGTSPLYAL, LSLIFWSLIIVVSFKYLMIIF, PLFYIVAIFGAGLLLGDGMLT, LYPYVLPIASLILILLFSLQA, IGYLFGPLILVWFITIAILGI, LLLGGIFLVVTGGEALFADIG, FFAALPCLLLNYFGQGANLIV, PFFMIAPSWFYLPLIIIATVA, IYVPQINFILFIGTMAFCLAF, IAVNLEMLLVDAMVAYAAISI, IFNVMFLFGLFLLIDLAFLGA, and FITGGWVPIVLAFFIAFIMYS.

Belongs to the HAK/KUP transporter (TC 2.A.72) family.

The protein localises to the cell inner membrane. The catalysed reaction is K(+)(in) + H(+)(in) = K(+)(out) + H(+)(out). Functionally, transport of potassium into the cell. Likely operates as a K(+):H(+) symporter. The polypeptide is Probable potassium transport system protein Kup 1 (Legionella pneumophila (strain Lens)).